Here is a 602-residue protein sequence, read N- to C-terminus: Peptide-N(4)-(N-acetyl-beta-glucosaminyl)asparagine amidase (602 aa).

The Thioredoxin domain maps to 2 to 130 (PVREVSRLPE…EKKFLERFVG (129 aa)). The Zn(2+) site is built by C189, C192, C222, and C225. C248 functions as the Nucleophile in the catalytic mechanism. Active-site residues include H275 and D292. Positions 400–602 (DMGGRTTGSK…ESMVVRVYMK (203 aa)) constitute a PAW domain.

The protein belongs to the transglutaminase-like superfamily. PNGase family. Zn(2+) serves as cofactor.

It localises to the cytoplasm. It is found in the endoplasmic reticulum. The enzyme catalyses Hydrolysis of an N(4)-(acetyl-beta-D-glucosaminyl)asparagine residue in which the glucosamine residue may be further glycosylated, to yield a (substituted) N-acetyl-beta-D-glucosaminylamine and a peptide containing an aspartate residue.. Specifically deglycosylates the denatured form of N-linked glycoproteins in the cytoplasm and assists their proteasome-mediated degradation. Cleaves the beta-aspartyl-glucosamine (GlcNAc) of the glycan and the amide side chain of Asn, converting Asn to Asp. Prefers proteins containing high-mannose over those bearing complex type oligosaccharides. Can recognize misfolded proteins in the endoplasmic reticulum that are exported to the cytosol to be destroyed and deglycosylate them, while it has no activity toward native proteins. Deglycosylation is a prerequisite for subsequent proteasome-mediated degradation of some, but not all, misfolded glycoproteins. Also displays oxidoreductase (thioredoxin) activity. In Caenorhabditis briggsae, this protein is Peptide-N(4)-(N-acetyl-beta-glucosaminyl)asparagine amidase (png-1).